A 293-amino-acid polypeptide reads, in one-letter code: Elongation factor Ts (293 aa).

An involved in Mg(2+) ion dislocation from EF-Tu region spans residues 79–82 (TDFV).

This sequence belongs to the EF-Ts family.

The protein localises to the cytoplasm. Functionally, associates with the EF-Tu.GDP complex and induces the exchange of GDP to GTP. It remains bound to the aminoacyl-tRNA.EF-Tu.GTP complex up to the GTP hydrolysis stage on the ribosome. This Bacillus pumilus (strain SAFR-032) protein is Elongation factor Ts.